Consider the following 478-residue polypeptide: ATP synthase subunit beta (478 aa).

ATP is bound at residue 161–168; sequence GGAGVGKT.

This sequence belongs to the ATPase alpha/beta chains family. In terms of assembly, F-type ATPases have 2 components, CF(1) - the catalytic core - and CF(0) - the membrane proton channel. CF(1) has five subunits: alpha(3), beta(3), gamma(1), delta(1), epsilon(1). CF(0) has four main subunits: a(1), b(1), b'(1) and c(9-12).

It localises to the cell inner membrane. The enzyme catalyses ATP + H2O + 4 H(+)(in) = ADP + phosphate + 5 H(+)(out). In terms of biological role, produces ATP from ADP in the presence of a proton gradient across the membrane. The catalytic sites are hosted primarily by the beta subunits. This is ATP synthase subunit beta from Gloeobacter violaceus (strain ATCC 29082 / PCC 7421).